The sequence spans 56 residues: Large ribosomal subunit protein bL32 (56 aa).

A disordered region spans residues 1 to 39 (MAVQQNKKSRSKRGMRRSHDSLSTAQLSVDATSGELHRR). Residues 7 to 16 (KKSRSKRGMR) show a composition bias toward basic residues. The span at 21–31 (SLSTAQLSVDA) shows a compositional bias: polar residues.

This sequence belongs to the bacterial ribosomal protein bL32 family.

This is Large ribosomal subunit protein bL32 from Shewanella piezotolerans (strain WP3 / JCM 13877).